The chain runs to 306 residues: D-alanine--D-alanine ligase (306 aa).

Positions 101–303 constitute an ATP-grasp domain; the sequence is KQVWQAVGLP…FSQLVVKILE (203 aa). Residue 134 to 189 participates in ATP binding; it reads FTHLGLPLIVKPSREGSSVGMSKVNTLSDLPAALEEAFRHDDDVLVEKWLSGPEYT. 3 residues coordinate Mg(2+): aspartate 257, glutamate 270, and asparagine 272.

Belongs to the D-alanine--D-alanine ligase family. Mg(2+) serves as cofactor. Requires Mn(2+) as cofactor.

The protein resides in the cytoplasm. The catalysed reaction is 2 D-alanine + ATP = D-alanyl-D-alanine + ADP + phosphate + H(+). It participates in cell wall biogenesis; peptidoglycan biosynthesis. Functionally, cell wall formation. This is D-alanine--D-alanine ligase from Pectobacterium atrosepticum (strain SCRI 1043 / ATCC BAA-672) (Erwinia carotovora subsp. atroseptica).